Consider the following 547-residue polypeptide: Chaperonin GroEL 1 (547 aa).

ATP is bound by residues 30–33 (TLGP), Lys51, 87–91 (DGTTT), Gly415, and Asp496.

The protein belongs to the chaperonin (HSP60) family. In terms of assembly, forms a cylinder of 14 subunits composed of two heptameric rings stacked back-to-back. Interacts with the co-chaperonin GroES.

The protein resides in the cytoplasm. The catalysed reaction is ATP + H2O + a folded polypeptide = ADP + phosphate + an unfolded polypeptide.. Functionally, together with its co-chaperonin GroES, plays an essential role in assisting protein folding. The GroEL-GroES system forms a nano-cage that allows encapsulation of the non-native substrate proteins and provides a physical environment optimized to promote and accelerate protein folding. The protein is Chaperonin GroEL 1 of Bradyrhizobium sp. (strain BTAi1 / ATCC BAA-1182).